Reading from the N-terminus, the 442-residue chain is tRNA pseudouridine(38/39) synthase (442 aa).

D151 (nucleophile) is an active-site residue. Y222 provides a ligand contact to substrate.

It belongs to the tRNA pseudouridine synthase TruA family.

Its subcellular location is the nucleus. It catalyses the reaction uridine(38/39) in tRNA = pseudouridine(38/39) in tRNA. Formation of pseudouridines at positions 38 and 39 in the anticodon stem and loop of transfer RNAs. This chain is tRNA pseudouridine(38/39) synthase (DEG1), found in Saccharomyces cerevisiae (strain ATCC 204508 / S288c) (Baker's yeast).